Reading from the N-terminus, the 168-residue chain is ATP synthase subunit b (168 aa).

Residues 9–29 (AIPFGTIAYTLFIFLILLVML) form a helical membrane-spanning segment.

The protein belongs to the ATPase B chain family. As to quaternary structure, F-type ATPases have 2 components, F(1) - the catalytic core - and F(0) - the membrane proton channel. F(1) has five subunits: alpha(3), beta(3), gamma(1), delta(1), epsilon(1). F(0) has three main subunits: a(1), b(2) and c(10-14). The alpha and beta chains form an alternating ring which encloses part of the gamma chain. F(1) is attached to F(0) by a central stalk formed by the gamma and epsilon chains, while a peripheral stalk is formed by the delta and b chains.

It is found in the cell membrane. Its function is as follows. F(1)F(0) ATP synthase produces ATP from ADP in the presence of a proton or sodium gradient. F-type ATPases consist of two structural domains, F(1) containing the extramembraneous catalytic core and F(0) containing the membrane proton channel, linked together by a central stalk and a peripheral stalk. During catalysis, ATP synthesis in the catalytic domain of F(1) is coupled via a rotary mechanism of the central stalk subunits to proton translocation. Functionally, component of the F(0) channel, it forms part of the peripheral stalk, linking F(1) to F(0). The protein is ATP synthase subunit b of Bacillus cereus (strain G9842).